The chain runs to 614 residues: Serine/threonine-protein kinase-like protein E (614 aa).

Residues 15-404 (YLIQLHLGQN…NPNTNGAPLS (390 aa)) form the Protein kinase domain. 21–29 (LGQNSLGQQ) is an ATP binding site. Residues 256–269 (PEQTDNGVGKSSTG) are compositionally biased toward polar residues. The disordered stretch occupies residues 256 to 284 (PEQTDNGVGKSSTGEPPFPTVHQSPESSS).

It belongs to the protein kinase superfamily. Ser/Thr protein kinase family.

Lacks protein kinase activity. The sequence is that of Serine/threonine-protein kinase-like protein E (spkE) from Synechocystis sp. (strain ATCC 27184 / PCC 6803 / Kazusa).